Consider the following 205-residue polypeptide: Metalloproteinase inhibitor 1 (205 aa).

A signal peptide spans 1–24 (MMAPFASLASGILLLLSLIASSKA). Cys-25 provides a ligand contact to Zn(2+). The tract at residues 25–28 (CSCA) is involved in metalloproteinase-binding. Disulfide bonds link Cys-25/Cys-94, Cys-27/Cys-123, Cys-37/Cys-148, Cys-151/Cys-197, Cys-156/Cys-161, and Cys-169/Cys-189. The region spanning 25 to 148 (CSCAPPHPQT…AFSKTYSAGC (124 aa)) is the NTR domain. Asn-54 carries N-linked (GlcNAc...) asparagine glycosylation. The segment at 91 to 92 (ES) is involved in metalloproteinase-binding. Asn-102 carries an N-linked (GlcNAc...) asparagine glycan. Position 179 is a phosphoserine (Ser-179).

Belongs to the protease inhibitor I35 (TIMP) family. In terms of assembly, interacts with MMP1, MMP3, MMP10 and MMP13, but has only very low affinity for MMP14. Interacts with CD63; identified in a complex with CD63 and ITGB1. Post-translationally, the activity of TIMP1 is dependent on the presence of disulfide bonds. N-glycosylated. As to expression, found in fetal and adult tissues. Highest levels are found in bone. Also found in lung, ovary and uterus.

It localises to the secreted. Functionally, metalloproteinase inhibitor that functions by forming one to one complexes with target metalloproteinases, such as collagenases, and irreversibly inactivates them by binding to their catalytic zinc cofactor. Acts on MMP1, MMP2, MMP3, MMP7, MMP8, MMP9, MMP10, MMP11, MMP12, MMP13 and MMP16. Does not act on MMP14. Also functions as a growth factor that regulates cell differentiation, migration and cell death and activates cellular signaling cascades via CD63 and ITGB1. Plays a role in integrin signaling. The protein is Metalloproteinase inhibitor 1 (Timp1) of Mus musculus (Mouse).